The sequence spans 267 residues: 4-hydroxy-tetrahydrodipicolinate reductase (267 aa).

NAD(+) contacts are provided by residues 8 to 13 (GAAGRM) and Asp34. Arg35 contacts NADP(+). Residues 98 to 100 (GTT) and 122 to 125 (AANF) each bind NAD(+). The active-site Proton donor/acceptor is the His155. His156 contributes to the (S)-2,3,4,5-tetrahydrodipicolinate binding site. The active-site Proton donor is Lys159. 165–166 (GT) serves as a coordination point for (S)-2,3,4,5-tetrahydrodipicolinate.

The protein belongs to the DapB family.

The protein resides in the cytoplasm. The enzyme catalyses (S)-2,3,4,5-tetrahydrodipicolinate + NAD(+) + H2O = (2S,4S)-4-hydroxy-2,3,4,5-tetrahydrodipicolinate + NADH + H(+). It catalyses the reaction (S)-2,3,4,5-tetrahydrodipicolinate + NADP(+) + H2O = (2S,4S)-4-hydroxy-2,3,4,5-tetrahydrodipicolinate + NADPH + H(+). It functions in the pathway amino-acid biosynthesis; L-lysine biosynthesis via DAP pathway; (S)-tetrahydrodipicolinate from L-aspartate: step 4/4. Functionally, catalyzes the conversion of 4-hydroxy-tetrahydrodipicolinate (HTPA) to tetrahydrodipicolinate. The chain is 4-hydroxy-tetrahydrodipicolinate reductase from Pseudomonas entomophila (strain L48).